Reading from the N-terminus, the 355-residue chain is Uroporphyrinogen decarboxylase (355 aa).

Substrate contacts are provided by residues 27-31 (RQAGR), Phe-46, Asp-77, Tyr-154, Ser-209, and His-327.

This sequence belongs to the uroporphyrinogen decarboxylase family. Homodimer.

The protein resides in the cytoplasm. The catalysed reaction is uroporphyrinogen III + 4 H(+) = coproporphyrinogen III + 4 CO2. It participates in porphyrin-containing compound metabolism; protoporphyrin-IX biosynthesis; coproporphyrinogen-III from 5-aminolevulinate: step 4/4. Its function is as follows. Catalyzes the decarboxylation of four acetate groups of uroporphyrinogen-III to yield coproporphyrinogen-III. This is Uroporphyrinogen decarboxylase from Nitrosomonas europaea (strain ATCC 19718 / CIP 103999 / KCTC 2705 / NBRC 14298).